The following is a 40-amino-acid chain: Photosystem II reaction center protein X (40 aa).

A helical membrane pass occupies residues 10–30 (WSLVWGTVIVVIPVTVGLVFI).

The protein belongs to the PsbX family. Type 1 subfamily. PSII is composed of 1 copy each of membrane proteins PsbA, PsbB, PsbC, PsbD, PsbE, PsbF, PsbH, PsbI, PsbJ, PsbK, PsbL, PsbM, PsbT, PsbX, PsbY, PsbZ, Psb30/Ycf12, peripheral proteins PsbO, CyanoQ (PsbQ), PsbU, PsbV and a large number of cofactors. It forms dimeric complexes.

The protein localises to the cellular thylakoid membrane. Involved in the binding and/or turnover of quinones at the Q(B) site of photosystem II (PSII). PSII is a light-driven water plastoquinone oxidoreductase, using light energy to abstract electrons from H(2)O, generating a proton gradient subsequently used for ATP formation. The protein is Photosystem II reaction center protein X of Crocosphaera subtropica (strain ATCC 51142 / BH68) (Cyanothece sp. (strain ATCC 51142)).